Here is a 666-residue protein sequence, read N- to C-terminus: MQAVNIIRWIDGPVLVGDSPGSKPPSERLQDTMAVSDPPVEAAGEASATRSGFWALTLGSIGVVFGDIGTSPLYAFREAVSHAAQQGTVTPVIVLGVLSLILWSLFIVVTAKYVLLLLRADNNGEGGTLSLMALGQRALGRQSLLLLALGVVGASMFIGDSMITPAISVLSAVEGLKLAAPEFGNYVVPLTLLILVMLFAVQSRGTASVASAFAPVMALWFVAIAVLGALHIHEDPSVLLAVNPWYAIHFLLNHGLIGLVIMGLVFLSVTGGEALYADLGHFGRKPIQAAWFCLVLPALLLNYFGQGALILAHPDAIENPFYRLAPAPMILPLVILATAATVIASQAVITGAYSLIRQAVQLGLLPRFEVRYTSETHAGQIYLPRVNILLLIGVLLLVLLFRTSSGLASAYGIAVSTTMVADGIMGFVVVWKLWNWRAATAAALVVPLVVVDIMFFSANLLKLLDGAWVPLLFGLIMVVLIWTWRRGAAILIKKTRRTEVPLLDLIKSLEKRPPHIVKGTAVFLTSDPNFVPTALLHNLKHNKVLHEHNVILTIETAQTPRVDPSERVRMENISEKFSTVSLRFGFMESPNVPKALVIARKLGWQFDIMATSFFVSRRSLKASAQSGMPVWQDRLFIAMSRSANDAINYFQIPTGRVVEVGTQVII.

12 helical membrane passes run 53–73 (FWALTLGSIGVVFGDIGTSPL), 89–109 (VTPVIVLGVLSLILWSLFIVV), 144–164 (LLLLALGVVGASMFIGDSMIT), 181–201 (PEFGNYVVPLTLLILVMLFAV), 212–232 (AFAPVMALWFVAIAVLGALHI), 247–267 (AIHFLLNHGLIGLVIMGLVFL), 291–311 (WFCLVLPALLLNYFGQGALIL), 324–344 (LAPAPMILPLVILATAATVIA), 381–401 (IYLPRVNILLLIGVLLLVLLF), 411–431 (YGIAVSTTMVADGIMGFVVVW), 441–461 (AAALVVPLVVVDIMFFSANLL), and 463–483 (LLDGAWVPLLFGLIMVVLIWT).

It belongs to the HAK/KUP transporter (TC 2.A.72) family.

The protein resides in the cell inner membrane. The enzyme catalyses K(+)(in) + H(+)(in) = K(+)(out) + H(+)(out). Functionally, transport of potassium into the cell. Likely operates as a K(+):H(+) symporter. This chain is Probable potassium transport system protein Kup, found in Nitrobacter hamburgensis (strain DSM 10229 / NCIMB 13809 / X14).